We begin with the raw amino-acid sequence, 209 residues long: Ribosomal RNA large subunit methyltransferase E (209 aa).

Positions 63, 65, 83, 99, and 124 each coordinate S-adenosyl-L-methionine. K164 functions as the Proton acceptor in the catalytic mechanism. In terms of domain architecture, TRAM spans 191–209 (EASRGRSREVYIVATGYKG).

Belongs to the class I-like SAM-binding methyltransferase superfamily. RNA methyltransferase RlmE family.

The protein resides in the cytoplasm. It catalyses the reaction uridine(2552) in 23S rRNA + S-adenosyl-L-methionine = 2'-O-methyluridine(2552) in 23S rRNA + S-adenosyl-L-homocysteine + H(+). Specifically methylates the uridine in position 2552 of 23S rRNA at the 2'-O position of the ribose in the fully assembled 50S ribosomal subunit. The sequence is that of Ribosomal RNA large subunit methyltransferase E from Haemophilus influenzae (strain ATCC 51907 / DSM 11121 / KW20 / Rd).